The sequence spans 1003 residues: Cytosolic carboxypeptidase 3 (1003 aa).

Positions 1-23 (MSEDSEKEDYSDRTISDEDESDE) are disordered. A Peptidase M14 domain is found at 299-570 (YPYTYTNLQE…HFCDSLLDYC (272 aa)). Residues H364, E367, and H460 each coordinate Zn(2+). Catalysis depends on E534, which acts as the Proton donor/acceptor. 2 disordered regions span residues 642–662 (KQLK…NIRE) and 911–1003 (KSSE…QRDT). A compositionally biased stretch (basic and acidic residues) spans 649-662 (ERNSTIERHQNIRE). A compositionally biased stretch (basic residues) spans 922-934 (PKKRRKYSRVKAT). A compositionally biased stretch (polar residues) spans 963–976 (AEGSSQQGTMQTAP).

This sequence belongs to the peptidase M14 family. Zn(2+) is required as a cofactor.

It localises to the cytoplasm. The protein localises to the cytosol. The enzyme catalyses (L-glutamyl)(n+1)-gamma-L-glutamyl-L-glutamyl-[protein] + H2O = (L-glutamyl)(n)-gamma-L-glutamyl-L-glutamyl-[protein] + L-glutamate. Its function is as follows. Metallocarboxypeptidase that mediates deglutamylation of tubulin and non-tubulin target proteins. Catalyzes the removal of polyglutamate side chains present on the gamma-carboxyl group of glutamate residues within the C-terminal tail of tubulin protein. Specifically cleaves tubulin long-side-chains, while it is not able to remove the branching point glutamate. Also catalyzes the removal of polyglutamate residues from the carboxy-terminus of non-tubulin proteins such as MYLK. May catalyze the hydrolysis of aspartate from the carboxy-terminus of target proteins. Does not show detyrosinase or deglycylase activities from the carboxy-terminus of target proteins. This is Cytosolic carboxypeptidase 3 (AGBL3) from Bos taurus (Bovine).